Here is a 364-residue protein sequence, read N- to C-terminus: Chaperone protein DnaJ (364 aa).

The J domain occupies 5–71 (DYYEILGVAK…QKRQAYDQFG (67 aa)). Residues 127–205 (GSTVKIRIPK…CRGQGLVRKQ (79 aa)) form a CR-type zinc finger. Cys140, Cys143, Cys157, Cys160, Cys179, Cys182, Cys193, and Cys196 together coordinate Zn(2+). CXXCXGXG motif repeat units lie at residues 140 to 147 (CDTCSGIG), 157 to 164 (CSICSGVG), 179 to 186 (CGTCSGTG), and 193 to 200 (CGTCRGQG).

The protein belongs to the DnaJ family. Homodimer. It depends on Zn(2+) as a cofactor.

The protein resides in the cytoplasm. Functionally, participates actively in the response to hyperosmotic and heat shock by preventing the aggregation of stress-denatured proteins and by disaggregating proteins, also in an autonomous, DnaK-independent fashion. Unfolded proteins bind initially to DnaJ; upon interaction with the DnaJ-bound protein, DnaK hydrolyzes its bound ATP, resulting in the formation of a stable complex. GrpE releases ADP from DnaK; ATP binding to DnaK triggers the release of the substrate protein, thus completing the reaction cycle. Several rounds of ATP-dependent interactions between DnaJ, DnaK and GrpE are required for fully efficient folding. Also involved, together with DnaK and GrpE, in the DNA replication of plasmids through activation of initiation proteins. The protein is Chaperone protein DnaJ of Ruthia magnifica subsp. Calyptogena magnifica.